The primary structure comprises 452 residues: Plasmepsin I (452 aa).

Over Met1 to Arg37 the chain is Cytoplasmic. The propeptide occupies Met1 to Gly123. The chain crosses the membrane as a helical; Signal-anchor for type II membrane protein span at residues Phe38 to Ile58. Topologically, residues Asp59–Leu452 are lumenal. One can recognise a Peptidase A1 domain in the interval Tyr139–Ala446. Asp157 is a catalytic residue. Cys170 and Cys175 form a disulfide bridge. Residue Asp337 is part of the active site. Residues Cys372 and Cys408 are joined by a disulfide bond.

It belongs to the peptidase A1 family. Not N-glycosylated. In terms of processing, proteolytically cleaved into the soluble active mature form in the digestive vacuole by cysteine protease falcipains; the process begins at the early ring stage. Proteolysis requires an acidic environment.

The protein resides in the membrane. The protein localises to the vacuole lumen. Its subcellular location is the vacuole membrane. It catalyses the reaction Hydrolysis of the 33-Phe-|-Leu-34 bond in the alpha-chain of hemoglobin, leading to denaturation of molecule.. Inhibited by KNI derived compounds KNI-10333 and to a lesser extent KNI-10743. Its function is as follows. During the asexual blood stage, catalyzes the initial cleavage of native host hemoglobin (Hb) resulting in Hb denaturation; specifically cleaves between Phe-33 and Leu-34 of Hb alpha-chain. Digestion of host Hb is an essential step which provides the parasite with amino acids for protein synthesis, and regulates osmolarity. This chain is Plasmepsin I, found in Plasmodium falciparum (isolate 3D7).